The following is a 430-amino-acid chain: uncharacterized protein (430 aa).

Positions 1–19 (MKILLFVVLFFNVLVGIYS) are cleaved as a signal peptide. N39 is a glycosylation site (N-linked (GlcNAc...) asparagine). Residues 119–408 (LDPNSSPSPS…ELLEKNSDGN (290 aa)) form a disordered region. Residues 124-168 (SPSPSPSPSPSPSPSPSPSPSPSPSPSPSPSPSPSPSPSPSPSPS) are compositionally biased toward pro residues. Composition is skewed to low complexity over residues 169–253 (PSSS…TPSQ) and 263–285 (PTPT…TQTP). Over residues 286–303 (ISSRPMSISTEKPSSSEE) the composition is skewed to polar residues. N-linked (GlcNAc...) asparagine glycosylation occurs at N312. Basic and acidic residues predominate over residues 316–325 (SEDKKKDSES). The span at 326–370 (KSSQSESPSPSASASESESASESASASTSVSVSASPLPIMDSSSS) shows a compositional bias: low complexity. An N-linked (GlcNAc...) asparagine glycan is attached at N408.

It is found in the secreted. This is an uncharacterized protein from Dictyostelium discoideum (Social amoeba).